Reading from the N-terminus, the 182-residue chain is Ribosome maturation factor RimM (182 aa).

Positions 106-179 (EGEFHVLDLI…RIEITPPPGL (74 aa)) constitute a PRC barrel domain.

The protein belongs to the RimM family. As to quaternary structure, binds ribosomal protein uS19.

It is found in the cytoplasm. An accessory protein needed during the final step in the assembly of 30S ribosomal subunit, possibly for assembly of the head region. Essential for efficient processing of 16S rRNA. May be needed both before and after RbfA during the maturation of 16S rRNA. It has affinity for free ribosomal 30S subunits but not for 70S ribosomes. The protein is Ribosome maturation factor RimM of Synechococcus elongatus (strain ATCC 33912 / PCC 7942 / FACHB-805) (Anacystis nidulans R2).